A 307-amino-acid polypeptide reads, in one-letter code: Glycine--tRNA ligase alpha subunit (307 aa).

The protein belongs to the class-II aminoacyl-tRNA synthetase family. Tetramer of two alpha and two beta subunits.

The protein resides in the cytoplasm. The catalysed reaction is tRNA(Gly) + glycine + ATP = glycyl-tRNA(Gly) + AMP + diphosphate. This chain is Glycine--tRNA ligase alpha subunit (glyQ), found in Xylella fastidiosa (strain 9a5c).